An 80-amino-acid chain; its full sequence is Histone H1.M6.1 (80 aa).

The segment at 1-80 (MSDAAVPPKK…KAVKKAPKKK (80 aa)) is disordered. Over residues 11-80 (ASPKKAAAKK…KAVKKAPKKK (70 aa)) the composition is skewed to basic residues.

It localises to the nucleus. It is found in the chromosome. This Trypanosoma cruzi protein is Histone H1.M6.1.